Consider the following 510-residue polypeptide: Inositol-3-phosphate synthase (510 aa).

Positions 70, 71, 72, 73, 143, 180, 190, 193, 230, 231, 232, 233, 281, 282, 306, 309, 340, 341, 342, 355, 393, 394, 422, and 423 each coordinate NAD(+).

This sequence belongs to the myo-inositol 1-phosphate synthase family. NAD(+) serves as cofactor.

Its subcellular location is the cytoplasm. The protein resides in the cytosol. It localises to the nucleus. The catalysed reaction is D-glucose 6-phosphate = 1D-myo-inositol 3-phosphate. Its pathway is polyol metabolism; myo-inositol biosynthesis; myo-inositol from D-glucose 6-phosphate: step 1/2. In terms of biological role, key enzyme in myo-inositol biosynthesis pathway that catalyzes the conversion of glucose 6-phosphate to 1-myo-inositol 1-phosphate in a NAD-dependent manner. The polypeptide is Inositol-3-phosphate synthase (Nicotiana tabacum (Common tobacco)).